The following is a 968-amino-acid chain: Alanine--tRNA ligase, cytoplasmic (968 aa).

Met-1 carries the post-translational modification N-acetylmethionine. Ser-3 is modified (phosphoserine). N6-acetyllysine is present on Lys-19. ATP is bound by residues Arg-77, His-95, Trp-176, and 214–216 (IWN). L-alanine is bound by residues Asn-216 and Asp-239. Gly-243 is a binding site for ATP. Residues Ser-399 and Ser-555 each carry the phosphoserine modification. Positions 605, 609, 723, and 727 each coordinate Zn(2+). The short motif at 750–763 (RRIVAVTGAEAQKA) is the Nuclear localization signal element. An N6-acetyllysine modification is found at Lys-876. Lys-943 carries the post-translational modification N6,N6,N6-trimethyllysine; alternate. Lys-943 carries the post-translational modification N6,N6-dimethyllysine; alternate. Lys-943 carries the N6-methyllysine; alternate modification.

The protein belongs to the class-II aminoacyl-tRNA synthetase family. In terms of assembly, monomer. Interacts with ANKRD16; the interaction is direct. It depends on Zn(2+) as a cofactor. In terms of processing, ISGylated. Post-translationally, methylation at 'Lys-943' by METTL21C.

It is found in the cytoplasm. The protein localises to the nucleus. It catalyses the reaction tRNA(Ala) + L-alanine + ATP = L-alanyl-tRNA(Ala) + AMP + diphosphate. It carries out the reaction (S)-lactate + ATP + H(+) = (S)-lactoyl-AMP + diphosphate. The catalysed reaction is (S)-lactoyl-AMP + L-lysyl-[protein] = N(6)-[(S)-lactoyl]-L-lysyl-[protein] + AMP + 2 H(+). With respect to regulation, the protein lactyltransferase activity is inhibited by beta-alanine. Catalyzes the attachment of alanine to tRNA(Ala) in a two-step reaction: alanine is first activated by ATP to form Ala-AMP and then transferred to the acceptor end of tRNA(Ala). Also edits incorrectly charged tRNA(Ala) via its editing domain. In presence of high levels of lactate, also acts as a protein lactyltransferase that mediates lactylation of lysine residues in target proteins, such as TEAD1, TP53/p53 and YAP1. Protein lactylation takes place in a two-step reaction: lactate is first activated by ATP to form lactate-AMP and then transferred to lysine residues of target proteins. Acts as an inhibitor of TP53/p53 activity by catalyzing lactylation of TP53/p53. Acts as a positive regulator of the Hippo pathway by mediating lactylation of TEAD1 and YAP1. This chain is Alanine--tRNA ligase, cytoplasmic (Aars1), found in Rattus norvegicus (Rat).